The sequence spans 230 residues: CRP-like protein Clp (230 aa).

18–139 is an a nucleoside 3',5'-cyclic phosphate binding site; it reads PSLTLDAGTI…APRILYAIGV (122 aa). Residues 158–230 form the HTH crp-type domain; sequence LDVTDRIVRT…GKTVVLYGTR (73 aa). Positions 190 to 209 form a DNA-binding region, H-T-H motif; sequence RQELARLVGCSREMAGRVLK.

Homodimer.

It localises to the cytoplasm. Its activity is regulated as follows. Allosterically inhibited by cyclic di-GMP (c-di-GMP), which binds to Clp and abolishes its ability to bind its target gene promoter. Functionally, global transcriptional regulator that regulates virulence factors production by activating or repressing the expression of a large set of genes in diffusible signal factor (DSF) pathway. The chain is CRP-like protein Clp (clp) from Xanthomonas campestris pv. campestris (strain 8004).